We begin with the raw amino-acid sequence, 136 residues long: Sec-independent protein translocase protein TatB (136 aa).

A helical membrane pass occupies residues 1 to 21 (MFDIGFWELVLISVIGLVVLG). The interval 66–136 (ASKQGLSDLD…TTPPRQDKNE (71 aa)) is disordered. Basic and acidic residues-rich tracts occupy residues 77 to 89 (ELQK…KETA) and 96 to 107 (YKKDIDDIKTSL). Positions 108 to 130 (DKNPSGTTQQENSILDSSKTTPP) are enriched in polar residues.

This sequence belongs to the TatB family. As to quaternary structure, the Tat system comprises two distinct complexes: a TatABC complex, containing multiple copies of TatA, TatB and TatC subunits, and a separate TatA complex, containing only TatA subunits. Substrates initially bind to the TatABC complex, which probably triggers association of the separate TatA complex to form the active translocon.

It is found in the cell inner membrane. Functionally, part of the twin-arginine translocation (Tat) system that transports large folded proteins containing a characteristic twin-arginine motif in their signal peptide across membranes. Together with TatC, TatB is part of a receptor directly interacting with Tat signal peptides. TatB may form an oligomeric binding site that transiently accommodates folded Tat precursor proteins before their translocation. The chain is Sec-independent protein translocase protein TatB from Psychromonas ingrahamii (strain DSM 17664 / CCUG 51855 / 37).